The primary structure comprises 4814 residues: Nonribosomal peptide synthetase SIDC (4814 aa).

The tract at residues 21-453 (PGPTLLHQLV…MKTSGCHGAA (433 aa)) is adenylation 1. The 74-residue stretch at 528–601 (DLKKSTEPEL…HLVSSIKIID (74 aa)) folds into the Carrier 1 domain. O-(pantetheine 4'-phosphoryl)serine is present on Ser562. Positions 637–1045 (VQDIIPCTNL…SLLESMRSME (409 aa)) are condensation 1. The interval 1101 to 1488 (TYTDLNRNAN…SRVSSATAAV (388 aa)) is adenylation 2. Carrier domains are found at residues 1589 to 1666 (EDWN…HSSH) and 2134 to 2210 (SSWT…FENG). Ser1626 and Ser2171 each carry O-(pantetheine 4'-phosphoryl)serine. 2 condensation regions span residues 1706–2210 (LQEA…FENG) and 2243–2649 (LPCT…HQHD). Residues 2709–3100 (TFAQLNSIGN…IRSVKNIHDV (392 aa)) form an adenylation 3 region. The Carrier 4 domain maps to 3203–3280 (SKDSAGYQKL…DLAVALSTAS (78 aa)). At Ser3240 the chain carries O-(pantetheine 4'-phosphoryl)serine. The interval 3319 to 3732 (YIYPCSPLQQ…VQVETALVDA (414 aa)) is condensation 4. Positions 3747–3823 (EVWGPAADVL…YLSSLVMRLT (77 aa)) constitute a Carrier 5 domain. At Ser3784 the chain carries O-(pantetheine 4'-phosphoryl)serine. The interval 3857-4258 (DILPTTPLQD…YVLRHAEEDV (402 aa)) is condensation 5. Residues 4295–4368 (NATSLAIRKV…HMAEQVAALG (74 aa)) form the Carrier 6 domain. The residue at position 4329 (Ser4329) is an O-(pantetheine 4'-phosphoryl)serine. The segment at 4504–4686 (ETLLRLRIHH…HEDMQKITAD (183 aa)) is condensation 6.

This sequence belongs to the NRP synthetase family. The cofactor is pantetheine 4'-phosphate.

Its pathway is siderophore biosynthesis. In terms of biological role, nonribosomal peptide synthetase; part of the gene cluster that mediates the biosynthesis of at least 11 siderophores, including beauverichelin A, dimerumic acid (DA), Na-dimethyl coprogen (NADC), eleutherazine B, ferricrocin (FC), fusarinine A, fusarinine C (FsC), metachelin A, mevalonolactone, rhodotorulic acid (RA) and tenellin. This cocktail of siderophores for iron metabolism is essential for virulence, and more specifically for the fungal virulence in penetrating through the host cuticle. Siderophore synthesis is also involved in conidial germination under iron-deficient conditions. SIDC catalyzes the assembly of ferricrocin whereas SIDD catalyzes the assembly of fusarinine C. The protein is Nonribosomal peptide synthetase SIDC of Beauveria bassiana (strain ARSEF 2860) (White muscardine disease fungus).